The sequence spans 173 residues: Crossover junction endodeoxyribonuclease RuvC (173 aa).

Catalysis depends on residues Asp-8, Glu-69, and Asp-141. The Mg(2+) site is built by Asp-8, Glu-69, and Asp-141.

This sequence belongs to the RuvC family. In terms of assembly, homodimer which binds Holliday junction (HJ) DNA. The HJ becomes 2-fold symmetrical on binding to RuvC with unstacked arms; it has a different conformation from HJ DNA in complex with RuvA. In the full resolvosome a probable DNA-RuvA(4)-RuvB(12)-RuvC(2) complex forms which resolves the HJ. Mg(2+) is required as a cofactor.

It localises to the cytoplasm. The catalysed reaction is Endonucleolytic cleavage at a junction such as a reciprocal single-stranded crossover between two homologous DNA duplexes (Holliday junction).. Its function is as follows. The RuvA-RuvB-RuvC complex processes Holliday junction (HJ) DNA during genetic recombination and DNA repair. Endonuclease that resolves HJ intermediates. Cleaves cruciform DNA by making single-stranded nicks across the HJ at symmetrical positions within the homologous arms, yielding a 5'-phosphate and a 3'-hydroxyl group; requires a central core of homology in the junction. The consensus cleavage sequence is 5'-(A/T)TT(C/G)-3'. Cleavage occurs on the 3'-side of the TT dinucleotide at the point of strand exchange. HJ branch migration catalyzed by RuvA-RuvB allows RuvC to scan DNA until it finds its consensus sequence, where it cleaves and resolves the cruciform DNA. In Stenotrophomonas maltophilia (strain R551-3), this protein is Crossover junction endodeoxyribonuclease RuvC.